The sequence spans 60 residues: MNRFRVATDQLDLYKASLMNRAFSSNQNSRNNGKYFLQQLTQFQSTEIKGEGSVIRNLDN.

This is an uncharacterized protein from Dictyostelium discoideum (Social amoeba).